The primary structure comprises 193 residues: Segregation and condensation protein B (193 aa).

This sequence belongs to the ScpB family. As to quaternary structure, homodimer. Homodimerization may be required to stabilize the binding of ScpA to the Smc head domains. Component of a cohesin-like complex composed of ScpA, ScpB and the Smc homodimer, in which ScpA and ScpB bind to the head domain of Smc. The presence of the three proteins is required for the association of the complex with DNA.

Its subcellular location is the cytoplasm. Its function is as follows. Participates in chromosomal partition during cell division. May act via the formation of a condensin-like complex containing Smc and ScpA that pull DNA away from mid-cell into both cell halves. The chain is Segregation and condensation protein B from Clostridium botulinum (strain ATCC 19397 / Type A).